The chain runs to 193 residues: 7-methyl-GTP pyrophosphatase (193 aa).

Asp70 acts as the Proton acceptor in catalysis.

This sequence belongs to the Maf family. YceF subfamily. A divalent metal cation is required as a cofactor.

The protein localises to the cytoplasm. It catalyses the reaction N(7)-methyl-GTP + H2O = N(7)-methyl-GMP + diphosphate + H(+). Nucleoside triphosphate pyrophosphatase that hydrolyzes 7-methyl-GTP (m(7)GTP). May have a dual role in cell division arrest and in preventing the incorporation of modified nucleotides into cellular nucleic acids. The sequence is that of 7-methyl-GTP pyrophosphatase from Photobacterium profundum (strain SS9).